The primary structure comprises 318 residues: NADH-ubiquinone oxidoreductase chain 1 (318 aa).

8 consecutive transmembrane segments (helical) span residues 2–22 (FMINILMLIIPILLAVAFLTL), 70–90 (MFILAPIMALGLALTMWIPLP), 100–120 (LGVLFMLAMSSLAVYSILWSG), 147–167 (AIILLSVLLMSGSFTLSTLII), 172–192 (MWLILPAWPLAMMWFISTLAE), 222–242 (LFFMAEYANIIMMNIFTAILF), 253–273 (ELYTINFTIKSLLLTMSFLWI), and 294–314 (LPLTLALCMWHVSLPILTSGI).

Belongs to the complex I subunit 1 family. Core subunit of respiratory chain NADH dehydrogenase (Complex I) which is composed of 45 different subunits.

The protein resides in the mitochondrion inner membrane. It catalyses the reaction a ubiquinone + NADH + 5 H(+)(in) = a ubiquinol + NAD(+) + 4 H(+)(out). Core subunit of the mitochondrial membrane respiratory chain NADH dehydrogenase (Complex I) which catalyzes electron transfer from NADH through the respiratory chain, using ubiquinone as an electron acceptor. Essential for the catalytic activity and assembly of complex I. In Bos indicus (Zebu), this protein is NADH-ubiquinone oxidoreductase chain 1 (MT-ND1).